We begin with the raw amino-acid sequence, 1457 residues long: ABC transporter G family member 36 (1457 aa).

Positions Arg14–Asp43 are disordered. Residues Arg28–Arg39 show a composition bias toward basic and acidic residues. Positions Gly164 to Asp437 constitute an ABC transporter 1 domain. Gly197–Thr204 contacts ATP. The ABC transmembrane type-2 1 domain occupies Glu515–Leu728. Transmembrane regions (helical) follow at residues Phe533–Phe553, Ser565–Phe585, Ile621–Phe641, Leu653–Ala673, Ile677–Ile697, Trp706–Asn726, and Ile765–Leu785. The segment at Ser821–Asp841 is disordered. Residues Leu860 to Pro1112 enclose the ABC transporter 2 domain. Gly905–Thr912 is a binding site for ATP. An ABC transmembrane type-2 2 domain is found at Thr1185 to Phe1399. The next 7 helical transmembrane spans lie at Phe1209–Lys1229, Tyr1244–Val1264, Ile1292–Phe1312, Phe1319–Met1339, Ile1349–Ile1369, Trp1380–Gly1400, and Trp1429–Ile1449.

It belongs to the ABC transporter superfamily. ABCG family. PDR (TC 3.A.1.205) subfamily.

The protein resides in the membrane. Its function is as follows. May be a general defense protein. This chain is ABC transporter G family member 36, found in Oryza sativa subsp. japonica (Rice).